The chain runs to 300 residues: Cation-efflux pump FieF (300 aa).

The next 4 helical transmembrane spans lie at 12–32 (AALSATALASILLIIKIFAWW), 40–60 (LAALVDSLVDLAASLTNLFVV), 82–102 (AALAQSMFISGSALFLFLTGF), and 114–134 (PSIGIGVTLVALFSTLILVTF). Residues Asp-45 and Asp-49 each coordinate Zn(2+). Positions 153 and 157 each coordinate Zn(2+). 2 helical membrane-spanning segments follow: residues 155–175 (QSDVLMNGAILIALALSWYGF) and 178–198 (ADALFALGIGVYILYSALRMG).

The protein belongs to the cation diffusion facilitator (CDF) transporter (TC 2.A.4) family. FieF subfamily. Homodimer.

The protein resides in the cell inner membrane. The enzyme catalyses Zn(2+)(in) + H(+)(out) = Zn(2+)(out) + H(+)(in). The catalysed reaction is Cd(2+)(in) + H(+)(out) = Cd(2+)(out) + H(+)(in). It catalyses the reaction Fe(2+)(in) + H(+)(out) = Fe(2+)(out) + H(+)(in). Its function is as follows. Divalent metal cation transporter which exports Zn(2+), Cd(2+) and possibly Fe(2+). May be involved in zinc and iron detoxification by efflux. This chain is Cation-efflux pump FieF, found in Yersinia pestis bv. Antiqua (strain Antiqua).